Reading from the N-terminus, the 361-residue chain is 5-exo-hydroxycamphor dehydrogenase (361 aa).

Residues Cys40, His62, Cys98, Cys101, Cys104, and Cys170 each coordinate Zn(2+).

This sequence belongs to the zinc-containing alcohol dehydrogenase family. Requires Zn(2+) as cofactor.

It carries out the reaction (1R,4R,5R)-5-hydroxycamphor + NAD(+) = (1R,4R)-bornane-2,5-dione + NADH + H(+). It participates in terpene metabolism; (R)-camphor degradation. This is 5-exo-hydroxycamphor dehydrogenase (camD) from Pseudomonas putida (Arthrobacter siderocapsulatus).